Reading from the N-terminus, the 105-residue chain is uncharacterized protein (105 aa).

An N-terminal signal peptide occupies residues Met-1–Gly-19.

This is an uncharacterized protein from Magallana gigas (Pacific oyster).